The primary structure comprises 610 residues: Glutamine--fructose-6-phosphate aminotransferase [isomerizing] (610 aa).

The Nucleophile; for GATase activity role is filled by Cys2. The Glutamine amidotransferase type-2 domain occupies 2-218 (CGIVGAVAQR…EGDVAEITRR (217 aa)). SIS domains follow at residues 286 to 426 (AAEI…QQGR) and 459 to 600 (LATD…VDQP). The For Fru-6P isomerization activity role is filled by Lys605.

As to quaternary structure, homodimer.

The protein resides in the cytoplasm. It carries out the reaction D-fructose 6-phosphate + L-glutamine = D-glucosamine 6-phosphate + L-glutamate. Catalyzes the first step in hexosamine metabolism, converting fructose-6P into glucosamine-6P using glutamine as a nitrogen source. The protein is Glutamine--fructose-6-phosphate aminotransferase [isomerizing] of Vibrio vulnificus (strain YJ016).